Consider the following 718-residue polypeptide: LON peptidase N-terminal domain and RING finger protein 3 (718 aa).

The interval 1–69 is disordered; sequence MESLRTEQML…PGTSTPESKV (69 aa). Residues 57-66 are compositionally biased toward polar residues; the sequence is EQSPGTSTPE. Residues 67-100 form a TPR 1 repeat; it reads SKVLLTQADALASRGRIREALEVYRQLSERQQLV. The RING-type 1 zinc finger occupies 158–196; the sequence is CRKCHGFLSDPVSLSCGHTFCKLCLERGRAADRRCALCG. TPR repeat units follow at residues 243–276 and 278–310; these read ASQLRHEGNRLYRERQVEAALLKYNEAVKLAPND and LLYSNRSQIYFTLESHENALHDAEIACKLRPMG. The interval 322–413 is disordered; sequence SQEEAAARGD…TDQGDKPALS (92 aa). Basic and acidic residues predominate over residues 339-352; sequence AKVKGDGQQHHMKD. An RING-type 2 zinc finger spans residues 426 to 464; the sequence is CALCMRLFYEPVTTPCGHTFCLKCLERCLDHNAKCPLCK. The Lon N-terminal domain occupies 505–714; that stretch reads MEELSNLNKN…GIRRVLAFIS (210 aa).

This Macaca fascicularis (Crab-eating macaque) protein is LON peptidase N-terminal domain and RING finger protein 3 (LONRF3).